The chain runs to 3072 residues: Eukaryotic translation initiation factor 2-alpha kinase PK4 (3072 aa).

At 1–106 (MCNFIKKGIR…EFRWLINKLE (106 aa)) the chain is on the cytoplasmic side. The chain crosses the membrane as a helical span at residues 107 to 127 (IIYFYFFCHLLLLCIFQNIFL). Topologically, residues 128–1643 (LTYMSKEYFL…FTSIRYKRRR (1516 aa)) are lumenal. The segment at 383–402 (KEKCHRDEKCDRGENYDRGE) is disordered. The 10 X 7 AA tandem repeat of D-K-N-[GE]-L-D-[GD] stretch occupies residues 576–610 (KKKILDENDMITIDNNIDKKENILFPYFHMEILKD). The disordered stretch occupies residues 970–1010 (QYEDNNDNDNNKNDNNKNDNNKNDNNKNDNNNNNNNNNNNS). Over residues 978 to 996 (DNNKNDNNKNDNNKNDNNK) the composition is skewed to basic and acidic residues. The span at 997 to 1009 (NDNNNNNNNNNNN) shows a compositional bias: low complexity. The chain crosses the membrane as a helical span at residues 1644 to 1664 (WYWRVFYTIMFIIFFPVLFIY). Residues 1665–3072 (RRIIKRRKGS…IKNENNGADK (1408 aa)) lie on the Cytoplasmic side of the membrane. 2 disordered regions span residues 1737–1766 (KNYN…SKSN) and 1917–1937 (KVGS…KDKK). A compositionally biased stretch (low complexity) spans 1738–1766 (NYNNNNNNNNNKNNNNISNNNSNSNSKSN). Residues 1928–1937 (NYTDNEKDKK) are compositionally biased toward basic and acidic residues. ATP contacts are provided by residues 2152 to 2160 (IGQGGFGSV) and Lys2177. Disordered regions lie at residues 2316 to 2402 (FYSD…EGRD), 2479 to 2558 (RNED…KKLD), and 2691 to 2749 (ENDD…DDDI). Residues 2326 to 2335 (KNKENPEKNH) show a composition bias toward basic and acidic residues. A compositionally biased stretch (basic residues) spans 2362–2384 (HKLKKRKNKKKKSKKKRKSKSKI). Repeat copies occupy residues 2483 to 2489 (DKNGLDG), 2490 to 2496 (DKNGLDG), 2497 to 2503 (DKNGLDG), 2504 to 2510 (DKNGLDG), 2511 to 2517 (DKNGLDG), 2518 to 2524 (DKNELDG), 2525 to 2531 (DKNGLDG), 2532 to 2538 (DKNGLDG), 2539 to 2545 (DKNGLDG), and 2546 to 2552 (DKNELDD). One can recognise a Protein kinase domain in the interval 2627–2998 (TNVESINTNG…KIKVLLDPHL (372 aa)). The span at 2692 to 2702 (NDDDDDDDDDN) shows a compositional bias: acidic residues. Residue Asp2835 is the Proton acceptor of the active site. Residue Thr2902 is modified to Phosphothreonine.

The protein belongs to the protein kinase superfamily. Ser/Thr protein kinase family. GCN2 subfamily. As to quaternary structure, may form oligomers in response to stress; oligomerization may result in catalytic activity. Interacts with BIP; the interaction is disrupted in response to stress. In terms of processing, auto-phosphorylated.

It is found in the endoplasmic reticulum membrane. The enzyme catalyses L-seryl-[protein] + ATP = O-phospho-L-seryl-[protein] + ADP + H(+). It carries out the reaction L-threonyl-[protein] + ATP = O-phospho-L-threonyl-[protein] + ADP + H(+). With respect to regulation, dissociation from BIP and oligomerization, may results autophosphorylation and kinase activity induction. Its function is as follows. During the asexual blood stage, phosphorylates translation factor eIF2alpha in late schizonts resulting in protein translation inhibition. Plays a role in trophozoite differentiation into schizonts. The chain is Eukaryotic translation initiation factor 2-alpha kinase PK4 from Plasmodium falciparum (isolate 3D7).